The following is a 179-amino-acid chain: Inosine/xanthosine triphosphatase (179 aa).

Substrate-binding positions include 8-13 (TTNPAK) and 68-69 (EA). Glu68 provides a ligand contact to Mg(2+).

The protein belongs to the YjjX NTPase family. As to quaternary structure, homodimer. It depends on Mg(2+) as a cofactor. Mn(2+) serves as cofactor.

It catalyses the reaction XTP + H2O = XDP + phosphate + H(+). The catalysed reaction is ITP + H2O = IDP + phosphate + H(+). In terms of biological role, phosphatase that hydrolyzes non-canonical purine nucleotides such as XTP and ITP to their respective diphosphate derivatives. Probably excludes non-canonical purines from DNA/RNA precursor pool, thus preventing their incorporation into DNA/RNA and avoiding chromosomal lesions. In Serratia proteamaculans (strain 568), this protein is Inosine/xanthosine triphosphatase.